The chain runs to 157 residues: SsrA-binding protein (157 aa).

This sequence belongs to the SmpB family.

It is found in the cytoplasm. Functionally, required for rescue of stalled ribosomes mediated by trans-translation. Binds to transfer-messenger RNA (tmRNA), required for stable association of tmRNA with ribosomes. tmRNA and SmpB together mimic tRNA shape, replacing the anticodon stem-loop with SmpB. tmRNA is encoded by the ssrA gene; the 2 termini fold to resemble tRNA(Ala) and it encodes a 'tag peptide', a short internal open reading frame. During trans-translation Ala-aminoacylated tmRNA acts like a tRNA, entering the A-site of stalled ribosomes, displacing the stalled mRNA. The ribosome then switches to translate the ORF on the tmRNA; the nascent peptide is terminated with the 'tag peptide' encoded by the tmRNA and targeted for degradation. The ribosome is freed to recommence translation, which seems to be the essential function of trans-translation. The polypeptide is SsrA-binding protein (Clostridium novyi (strain NT)).